Consider the following 119-residue polypeptide: Ribonuclease P protein component (119 aa).

Belongs to the RnpA family. In terms of assembly, consists of a catalytic RNA component (M1 or rnpB) and a protein subunit.

The catalysed reaction is Endonucleolytic cleavage of RNA, removing 5'-extranucleotides from tRNA precursor.. RNaseP catalyzes the removal of the 5'-leader sequence from pre-tRNA to produce the mature 5'-terminus. It can also cleave other RNA substrates such as 4.5S RNA. The protein component plays an auxiliary but essential role in vivo by binding to the 5'-leader sequence and broadening the substrate specificity of the ribozyme. The polypeptide is Ribonuclease P protein component (Borreliella burgdorferi (strain ZS7) (Borrelia burgdorferi)).